Consider the following 271-residue polypeptide: Probable L,D-transpeptidase 3 (271 aa).

A L,D-TPase catalytic domain is found at 127 to 270 (VVGVASISQH…VDIGDPVIVQ (144 aa)). His228 serves as the catalytic Proton donor/acceptor. The active-site Nucleophile is the Cys246.

The protein operates within cell wall biogenesis; peptidoglycan biosynthesis. With respect to regulation, is irreversibly inactivated by the beta-lactam carbapenems via the formation of a covalent adduct resulting from acylation of the catalytic Cys. Imipenem is the most efficient drug for in vitro LdtMt3/Rv1433 inactivation. Probable L,D-transpeptidase that may perform as-yet-unknown cross-linking reactions in M.tuberculosis. Is not able to generate 3-&gt;3 cross-links in peptidoglycan, using tetrapeptide stems as acyl donor substrates. May function in the anchoring of proteins to peptidoglycan. In Mycobacterium tuberculosis (strain ATCC 25618 / H37Rv), this protein is Probable L,D-transpeptidase 3.